The primary structure comprises 23 residues: Hemocyanin subunit 4 (23 aa).

Belongs to the tyrosinase family. Hemocyanin subfamily. As to expression, hemolymph.

It is found in the secreted. Its subcellular location is the extracellular space. Its function is as follows. Hemocyanins are copper-containing oxygen carriers occurring freely dissolved in the hemolymph of many mollusks and arthropods. This is Hemocyanin subunit 4 from Carcinus maenas (Common shore crab).